Reading from the N-terminus, the 60-residue chain is Putative SERF-like protein (60 aa).

The segment covering 1–53 (MTRGNQRDLARQKNQKKQADLTKGKRTDNLTVEQRKARDAELMREKQKKKEEA) has biased composition (basic and acidic residues). The tract at residues 1 to 60 (MTRGNQRDLARQKNQKKQADLTKGKRTDNLTVEQRKARDAELMREKQKKKEEAAAAGTSK) is disordered.

Belongs to the SERF family.

In Drosophila melanogaster (Fruit fly), this protein is Putative SERF-like protein.